A 201-amino-acid polypeptide reads, in one-letter code: Large ribosomal subunit protein uL4 (201 aa).

A disordered region spans residues 42 to 67; that stretch reads GNSAQKTRSEVSGGGKKPWNQKGTGR.

The protein belongs to the universal ribosomal protein uL4 family. As to quaternary structure, part of the 50S ribosomal subunit.

Functionally, one of the primary rRNA binding proteins, this protein initially binds near the 5'-end of the 23S rRNA. It is important during the early stages of 50S assembly. It makes multiple contacts with different domains of the 23S rRNA in the assembled 50S subunit and ribosome. Its function is as follows. Forms part of the polypeptide exit tunnel. In Legionella pneumophila (strain Paris), this protein is Large ribosomal subunit protein uL4.